The sequence spans 229 residues: MSTWANLGLQDSASPLMEQLIFFHDHALLILVMITILVGYLMFMLFFNSYINRFLLHGQLIEMIWTILPAIILLFIAMPSLRLLYLLDEINEPSITLKSIGHQWYWSYEYSDFNDIEFDSYMIPTNELSNDGFRLLDVDNRIVLPMNSQIRILVTAADVIHSWTIPALGVKVDGTPGRLNQTNFFINRPGLFYGQCSEICGANHSFMPIVIESVPVNFFIKWIASKVNS.

Residues 1–26 (MSTWANLGLQDSASPLMEQLIFFHDH) are Mitochondrial intermembrane-facing. Residues 27–48 (ALLILVMITILVGYLMFMLFFN) form a helical membrane-spanning segment. At 49–62 (SYINRFLLHGQLIE) the chain is on the mitochondrial matrix side. A helical transmembrane segment spans residues 63–82 (MIWTILPAIILLFIAMPSLR). The Mitochondrial intermembrane portion of the chain corresponds to 83-229 (LLYLLDEINE…IKWIASKVNS (147 aa)). The Cu cation site is built by histidine 161, cysteine 196, glutamate 198, cysteine 200, histidine 204, and methionine 207. Glutamate 198 is a binding site for Mg(2+).

This sequence belongs to the cytochrome c oxidase subunit 2 family. Component of the cytochrome c oxidase (complex IV, CIV), a multisubunit enzyme composed of a catalytic core of 3 subunits and several supernumerary subunits. The complex exists as a monomer or a dimer and forms supercomplexes (SCs) in the inner mitochondrial membrane with ubiquinol-cytochrome c oxidoreductase (cytochrome b-c1 complex, complex III, CIII). Cu cation is required as a cofactor.

The protein resides in the mitochondrion inner membrane. The enzyme catalyses 4 Fe(II)-[cytochrome c] + O2 + 8 H(+)(in) = 4 Fe(III)-[cytochrome c] + 2 H2O + 4 H(+)(out). Functionally, component of the cytochrome c oxidase, the last enzyme in the mitochondrial electron transport chain which drives oxidative phosphorylation. The respiratory chain contains 3 multisubunit complexes succinate dehydrogenase (complex II, CII), ubiquinol-cytochrome c oxidoreductase (cytochrome b-c1 complex, complex III, CIII) and cytochrome c oxidase (complex IV, CIV), that cooperate to transfer electrons derived from NADH and succinate to molecular oxygen, creating an electrochemical gradient over the inner membrane that drives transmembrane transport and the ATP synthase. Cytochrome c oxidase is the component of the respiratory chain that catalyzes the reduction of oxygen to water. Electrons originating from reduced cytochrome c in the intermembrane space (IMS) are transferred via the dinuclear copper A center (CU(A)) of subunit 2 and heme A of subunit 1 to the active site in subunit 1, a binuclear center (BNC) formed by heme A3 and copper B (CU(B)). The BNC reduces molecular oxygen to 2 water molecules using 4 electrons from cytochrome c in the IMS and 4 protons from the mitochondrial matrix. The chain is Cytochrome c oxidase subunit 2 (mt:CoII) from Drosophila bifasciata (Fruit fly).